The sequence spans 1187 residues: Non-receptor tyrosine-protein kinase TYK2 (1187 aa).

One can recognise an FERM domain in the interval 26–431; that stretch reads GGLKVLLHWA…GYFRLTADSS (406 aa). A Phosphotyrosine modification is found at Tyr-292. Residues 335 to 366 form a disordered region; that stretch reads KEEGSSGSSGRNPQASLFGKKAKAHKAVGQPA. Residues 339-349 are compositionally biased toward polar residues; it reads SSGSSGRNPQA. The 80-residue stretch at 450–529 folds into the SH2; atypical domain; that stretch reads GIHGPLLEPF…GRSFPSVREL (80 aa). A phosphoserine mark is found at Ser-499 and Ser-525. The region spanning 589 to 875 is the Protein kinase 1 domain; sequence ITQLSHLGQG…LTRLQPHNLA (287 aa). At Tyr-604 the chain carries Phosphotyrosine. Residues 610–629 form a disordered region; that stretch reads VEGSGDPEEGKMDDEDPLVP. Residues 614 to 626 are compositionally biased toward acidic residues; that stretch reads GDPEEGKMDDEDP. A Phosphoserine modification is found at Ser-884. Residues 897-1176 form the Protein kinase 2 domain; that stretch reads LKKIRDLGEG…PILKTVHEKY (280 aa). ATP-binding positions include 903–911 and Lys-930; that span reads LGEGHFGKV. Asp-1023 (proton acceptor) is an active-site residue. Tyr-1054 is subject to Phosphotyrosine; by autocatalysis. Tyr-1055 carries the post-translational modification Phosphotyrosine.

The protein belongs to the protein kinase superfamily. Tyr protein kinase family. JAK subfamily. Interacts (via FERM domain) with JAKMIP1. Interacts with PIK3R1; this interaction is important for cell migration. Interacts with MPL/TPOR. In terms of assembly, (Microbial infection) Interacts with Epstein-Barr virus protein LMP1; this interaction inhibits TYK2-mediated interferon signaling. As to quaternary structure, (Microbial infection) Interacts with papillomavirus-18 protein E6; this interaction impairs JAK-STAT activation by interferon-alpha. (Microbial infection) Interacts with Epstein-Barr virus (EBV) tegument protein BGLF2; this interaction participates in the inhibition of type I IFN signaling by the virus. In terms of processing, phosphorylated. Phosphorylation by JAK1 at Tyr-1054 and Tyr-1055 induces kinase activation. Observed in all cell lines analyzed. Expressed in a variety of lymphoid and non-lymphoid cell lines.

The enzyme catalyses L-tyrosyl-[protein] + ATP = O-phospho-L-tyrosyl-[protein] + ADP + H(+). With respect to regulation, the protein kinase 1 domain (also termed pseudokinase domain) mediates autoinhibition of the TYK2 kinase domain. Its function is as follows. Tyrosine kinase of the non-receptor type involved in numerous cytokines and interferons signaling, which regulates cell growth, development, cell migration, innate and adaptive immunity. Plays both structural and catalytic roles in numerous interleukins and interferons (IFN-alpha/beta) signaling. Associates with heterodimeric cytokine receptor complexes and activates STAT family members including STAT1, STAT3, STAT4 or STAT6. The heterodimeric cytokine receptor complexes are composed of (1) a TYK2-associated receptor chain (IFNAR1, IL12RB1, IL10RB or IL13RA1), and (2) a second receptor chain associated either with JAK1 or JAK2. In response to cytokine-binding to receptors, phosphorylates and activates receptors (IFNAR1, IL12RB1, IL10RB or IL13RA1), creating docking sites for STAT members. In turn, recruited STATs are phosphorylated by TYK2 (or JAK1/JAK2 on the second receptor chain), form homo- and heterodimers, translocate to the nucleus, and regulate cytokine/growth factor responsive genes. Negatively regulates STAT3 activity by promototing phosphorylation at a specific tyrosine that differs from the site used for signaling. The sequence is that of Non-receptor tyrosine-protein kinase TYK2 (TYK2) from Homo sapiens (Human).